We begin with the raw amino-acid sequence, 103 residues long: Large ribosomal subunit protein bL21 (103 aa).

The protein belongs to the bacterial ribosomal protein bL21 family. Part of the 50S ribosomal subunit. Contacts protein L20.

This protein binds to 23S rRNA in the presence of protein L20. In Haemophilus influenzae (strain ATCC 51907 / DSM 11121 / KW20 / Rd), this protein is Large ribosomal subunit protein bL21.